An 86-amino-acid polypeptide reads, in one-letter code: Beta-toxin CsEI (86 aa).

Positions 1–19 are cleaved as a signal peptide; it reads MNSLLMITACLVLIGTVWA. Residues 20–84 form the LCN-type CS-alpha/beta domain; the sequence is KDGYLVEKTG…TWPLPNKTCG (65 aa). Disulfide bonds link Cys-30–Cys-83, Cys-34–Cys-59, Cys-43–Cys-64, and Cys-47–Cys-66. The residue at position 83 (Cys-83) is a Cysteine amide.

It belongs to the long (4 C-C) scorpion toxin superfamily. Sodium channel inhibitor family. Beta subfamily. In terms of tissue distribution, expressed by the venom gland.

The protein localises to the secreted. Its function is as follows. Beta toxins bind voltage-independently at site-4 of sodium channels (Nav) and shift the voltage of activation toward more negative potentials thereby affecting sodium channel activation and promoting spontaneous and repetitive firing. Affects channels from chicken and frog. This is Beta-toxin CsEI from Centruroides sculpturatus (Arizona bark scorpion).